Consider the following 39-residue polypeptide: Non-specific lipid-transfer protein (39 aa).

Belongs to the plant LTP family.

Functionally, plant non-specific lipid-transfer proteins transfer phospholipids as well as galactolipids across membranes. May play a role in wax or cutin deposition in the cell walls of expanding epidermal cells and certain secretory tissues. The sequence is that of Non-specific lipid-transfer protein from Musa acuminata (Banana).